Here is a 4042-residue protein sequence, read N- to C-terminus: MATTTAPTTQGHNQPSREPIAIVGSACRFPGGASSPSKLWKLLEHPRDVLKEIPPDRFSVDGFYHPDNMHHGTSNVRHSYILDDDIRVFDAQFFGIKPVEANSIDPQQRLLMETVYEGIESAGLQLNKMKGSQTGVYVGLMSNDYADMLGNDQESFPTYFATGTARSIVSNRVSYFFDWHGPSMTIDTACSSSLVAMHQAVQYLRSGDGSDVAIAAGTNILLNPDQYIAESKLKMLSPDGRSQMWDEKANGYARGDGIAVVVLKTLSQALRDGDHIECIVRETHINQDGKTKGITMPSATAQTALIRSTYKNAGLDITKPSDRPQFFEAHGTGTPAGDPIEAEAIHTAFFGYKGLSKEIEPLSVGSIKTIIGHTEGTAGLAAVLKASLALQAGVIPPNLLFDKVNPKVKPFYGNLQIQTQAKSWPSLAPGAVRRASVNSFGFGGANAHAILEAYEPSSTPTVGTPANVFTALNVSAMSETALRGTLKKYVEYLKEEPSVDLRSLALTVNTRRSTFPVRTSVFGTSVEELSQRLSERSEAEGKTLTPVAPTSLSSSPKILGVFTGQGAQWKQMGAVLLATSPRVVAILDQLEKSLAELPDGPSWSIKGEILADEDSRVNEAVISQPLCTAVQIVLVDLLQSAGVQFHTVVGHSSGEIGAAYAAGYLSASDAIRIAYYRGLHLYLAQGPNGQQGAMMAVGTSFEDAQELCDLPAFRGRISIAASNSSASVTLSGDLNAIEWAKDVFDDEKKFARLLKVDKAYHSHHMLACSDAYRKSMTDCGITVLQPARNGTTWISSVYGEDALDYRHEMNAEYWISNMVSPVLFSQAIEFAMADQGPFDIGIECGPHPALKGPALQVIQEMLGSSIPYTGLLSRGRPDTQALAEGISYLWQALGADVVNYTSFDRFIAGPDASEPQVLANLPSYAWDHDRAFWHESRQYWANRTKEDPPHEILGTKCPDGTDQQHRWRNMLRPREIPWIAGHQIQEQMVFPAAGYVSAAIEAVQMVTRGQSLGAIEIEDFVIGQAIAFNDEYASVETQFTLTDISVEKDIWSASFFFYSASPKSSRSLDLNASGKLKVTLGEPKDDFLPPHLSPEFNMIDVDSERFYDALKKLGFGYTGPFKALGSLKRRMGVATGTITNPTSTDPAHDLLLHPATFDNAIQSIILAYCYPNDGRLWSVQLPTGIKKIKINPVLCNRYAGKKALLCFKASTSDDRSAEIGGDVDIYDEQGNNALMQLEGLQTKPLANATAANDSPLFLETIWDIESPSREAAVADRPDMQPKTELSFDVERVAFFYLRHLDSVATREEREKAESHHKIFFEYIDHTVANVKSGTAQFAKREWMYDTHDEILDIISKYPDSLDMKLMHAVGEHLLPVIRGETTMLEYMREDNLLNDFYVHAIGFDEYTENLAQQVSQFSHRYPHMNILEIGAGTGGATKRIFSKLGKRFGSYTYTDISAGFFEKTRETFREYEHMMTFKALNIEKDPVEQGFTEQSYDLVVASLVLHATHEMETTMRNVRRLLKPGGYLIMLELGDYIEMRTGLIFGSLPGWWMGYDDGRKLSPCMSEEDWSVCMQKTGFSGVDAIVPRQSELPISLAVLTGQAVDDHVNFLRDPLTPGSIDFVESNLTIIGGTTSKVSAMVEEAAKSLGRFYEKIVTATSLAELDTTEVPFMGSVLFLTDLDEPIFENVTEDALTALKQLFKQSRTCLWVTQGARDDNPFQNMSVGLGRVVKLEMTHLRLQSLDFDVETEPSAPTIMQRLLQFEAMAQWEQSGESKDLLWSVEPEIGYDHGKAIIPRLMPNPVRNARYNSSRRLITKYMEPTSANLSLRWSGKSYDIHEGEPSGATSLVMDGRVQLEVSHSTLDAIGVTATDYAYLVLGKNVKSQQQVIALTPKSDSIVRVFDSWTVPYSMAEDDALRLLPVVYTNLMALSVISRLSSGETLVLVEPEEAFAQTLSRLATERAISVVTLTSRMDVKNSDWIYLHVNSPKRLVRSTVPRNASWVIADRDQGGLAANVLQCLPANCKILATESLTSKQPKLDTFSSMAFIPSILRTAFVRAHDIKATLELPSVVAAADISSDNQPSTEATFFSWTASPSVPVQVTPVDHGTLFSSEKTYWLVGLSGGLGLSLCDWMVKHGAKYIVITSRNPQVDARWEQHMKAQGAVVRVYANDITDRESVSSVCKKIRDELPPVGGIAQGAMVLADTMFVDMDLPRVQKVVGPKVNGSIHLHEMFVEVDLEFFVFFSSMAYVTGNQGQSIYAAANAYMTALAAQRRKRGLAGSAINIGTIIGNGYVTRQLTIAQQEYLTHMGNVFMSEQDFHQIFAEAVVAGRPTSKDIPEIMTGLRLAHLDDSDKVTWFHNPKFSHCVLWPEEQGGKAVMSKQNVTVRAQLLLATTADEAREIIEESLAAKLRSSLQIDATVSVINMNADQLGLDSLVAVDIRSWFIKELNVEMPVLKILGGYTVAEMVAAAQEKLSPSLIPNLGKEVDPSLKAVVKAQVEKPVAAAEEKPIVTEKAEYADFDDENEEEGIPTEDSLPEITVSDESSELSDREPAKFNFNGPGFKKVGFSPGPQTPLSEDDRSKWSSYGSPFDSDSDNASIRKSRTSAATSVTALDEYFSKPDHTIFERTLPMSFGQTRFWFLKFYMEDQTTFNITTSISLAGKLDVGRFSRAVHHLGRRHEALRTAFFTDSNNQPMQAVLKEPVLRLEHARGEANVASEYRRIKNHQYDIGRGETMKITLLSLSEKLHQLIIGYHHINMDGISLEVIIRDLQQLYDGKSLAPVSIQYPDFSIMQYKEHSSGQWDDELTFWKSEFADIPEPLPILPPSTKAVRTPLSIYSSNTVKFEVGAELSSQIENACKRTKTSPFNFYLATFKVLLYRLAEGKATDICIGMADGGRNNDLVSQSVGFFLNLLPLRFKQQSSQMFSDALKEARSKVITALANSKVPFDVLLNEVNAPRTATLSPLFQAFINYRQGVQEKRQFCGCESEATKFDGSQTAYDLSLDILGNPGSGIVYLAGQSSLYSQSDVETIAQSYYALLKAFAKNPALRISRPSLYDPQAVDHALAKGKGPTNVGTWPETLVHRVDEIVKAHGSKVALKSATAKLTYTQMAERVNAIASTLQSNGINKCSRVGVFQDPSTDFFCTILAVLRIGAVFVPLEPRLTAPRLATMVQDSDLNAIVYDKANQKTLAELGSNSKKINVSLVLAKSSAVVSNQATPGATAIILYTSGSTGKPKGILLSHSAWRNQIESSSRAWEVPTGTGVHLQQSSWSFDISISQTFVALANGASLIITPKTMRGDSSAITKTIVSDQVTHVQATPSELSSWLRFGDLAALRASKWQFAMTGGERMTPALIDGFRKLAKNDLKLFNAYGPAETTLAVGSSEVDYMTSDDLDTPFTLFPNYSVYILDGQKQPVPAGIPGEVYIGGAGVAQGYLNQDSLTAKRFLPDTFGTTEYTHFGWTKMHRSGDRGHLSEDGHLVLEGRIDGDTQVKLRGIRIDLQDIESAMVQQANGALTEAVVSVCKLQETEYLVAHVVISPTFTGNTESFLDQLRASLPVPQYMQPAIAVTLDALPVNHSGKVDRKAIAALPILPKATQPGATSQPRDSTEKLKDIWTQVLGQGMTSLHHIDAQSDFFHVGGSSLALVEVQAKIKTIFQVEVSLVQLFENPTLGAMARMVDPTAFSAPVNANLTIPAEVATAISAPTTSINTAPKEIDWEEETALTDDFYDIEIDPTPKDQGLPYKTVVITGATGFLGKALLRRMLDDNHIDKIHAITLRRSRSDLPGIFSDPKVHLHRGDLNAPRLGLSETAAAEIFAETDAVIHNGADVSFMKTYRTLSKTNVGSTRELVKLCLPHRIPIHYISSASVVHLSGLESYGEASVSSFEPPQDGTDGYTASKWASERFLERVSEKFSVPIWIHRPSSITGEDAPTLDLMTNMLSFSKKLRKAPTSPAWQGTLDFVDVEKVATEIVEEVKNDSAHPGGLVKYMYESGDLEIAVDDMKGSLERETGQAFQTLSLEEWTKAAAEEVTNELGICCSK.

Residues 17–453 (REPIAIVGSA…GANAHAILEA (437 aa)) enclose the Ketosynthase family 3 (KS3) domain. Active-site for beta-ketoacyl synthase activity residues include Cys-190, His-330, and His-373. A malonyl-CoA:ACP transacylase (MAT) domain region spans residues 561–878 (VFTGQGAQWK…TGLLSRGRPD (318 aa)). The interval 950-1083 (HEILGTKCPD…GKLKVTLGEP (134 aa)) is N-terminal hotdog fold. The dehydratase (DH) domain stretch occupies residues 950–1249 (HEILGTKCPD…LQTKPLANAT (300 aa)). Residues 950 to 1251 (HEILGTKCPD…TKPLANATAA (302 aa)) form the PKS/mFAS DH domain. His-982 functions as the Proton acceptor; for dehydratase activity in the catalytic mechanism. Residues 1098 to 1251 (MIDVDSERFY…TKPLANATAA (154 aa)) form a C-terminal hotdog fold region. Asp-1158 acts as the Proton donor; for dehydratase activity in catalysis. The segment at 1390-1613 (DNLLNDFYVH…VDDHVNFLRD (224 aa)) is methyltransferase (MT) domain. The interval 2116–2289 (TYWLVGLSGG…AGSAINIGTI (174 aa)) is ketoreductase (KR)domain. A Carrier 1 domain is found at 2399-2476 (EAREIIEESL…EMVAAAQEKL (78 aa)). Position 2436 is an O-(pantetheine 4'-phosphoryl)serine (Ser-2436). The interval 2515-2601 (EKAEYADFDD…FDSDSDNASI (87 aa)) is disordered. Positions 2520-2532 (ADFDDENEEEGIP) are enriched in acidic residues. Residues 2629–3061 (RTLPMSFGQT…ISRPSLYDPQ (433 aa)) form a condensation region. An adenylation region spans residues 3089–3486 (EIVKAHGSKV…EDGHLVLEGR (398 aa)). The 78-residue stretch at 3607-3684 (RDSTEKLKDI…AMARMVDPTA (78 aa)) folds into the Carrier 2 domain. An O-(pantetheine 4'-phosphoryl)serine modification is found at Ser-3644. Positions 3750 to 3971 (ITGATGFLGK…DFVDVEKVAT (222 aa)) are reductase-like domain.

This sequence in the C-terminal section; belongs to the NRP synthetase family.

The protein operates within mycotoxin biosynthesis. Its function is as follows. Hybrid PKS-NRPS synthetase; part of the gene cluster that mediates the biosynthesis of the cytotoxic leucine-containing cytochalasans, including aspochalasin C, aspochalasin E, TMC-169, flavichalasine F, aspergillin PZ, aspochalasin M and flavichalasine G. The first step in the pathway is catalyzed by the hybrid PKS-NRPS ffsA that utilizes 8 units of malonyl-CoA to iteratively assemble the octaketide chain before addition of L-leucine by the C-terminal NRPS modules. Because ffsA lacks a designated enoylreductase (ER) domain, the required activity is provided the enoyl reductase fssC. The methyltransferase (MT) domain of ffsA catalyzes the alpha-methylation at C10 and C14 using S-adenosyl-L-methionine as the methyl-donating cosubstrate. Reduction by the hydrolyase ffsE, followed by dehydration and intra-molecular Diels-Alder cyclization by the Diels-Alderase ffsF then yield the required isoindolone-fused macrocycle. A number of oxidative steps catalyzed by the tailoring cytochrome P450 monooxygenase ffsD, the FAD-linked oxidoreductase ffsJ and the short-chain dehydrogenase/reductase ffsI, are further required to afford the final products. The chain is Polyketide synthase-nonribosomal peptide synthetase ffsA from Aspergillus flavipes.